A 255-amino-acid chain; its full sequence is PHD finger protein ALFIN-LIKE 4 (255 aa).

Met1 is modified (N-acetylmethionine). The interval 145–200 (GKDKSSVSNNSSNRSKSSSKRGSESRAKFSKPEPKDDEEEEEEGVEEEDEDEQGET) is disordered. The segment covering 150 to 160 (SVSNNSSNRSK) has biased composition (low complexity). Basic and acidic residues predominate over residues 165–178 (RGSESRAKFSKPEP). Acidic residues predominate over residues 179-198 (KDDEEEEEEGVEEEDEDEQG). The PHD-type zinc finger occupies 199–251 (ETQCGACGESYAADEFWICCDLCEMWFHGKCVKITPARAEHIKQYKCPSCSNK).

Belongs to the Alfin family. Interacts with H3K4me3 and to a lesser extent with H3K4me2. In terms of tissue distribution, ubiquitously expressed.

The protein localises to the nucleus. In terms of biological role, histone-binding component that specifically recognizes H3 tails trimethylated on 'Lys-4' (H3K4me3), which mark transcription start sites of virtually all active genes. The sequence is that of PHD finger protein ALFIN-LIKE 4 (AL4) from Arabidopsis thaliana (Mouse-ear cress).